The primary structure comprises 170 residues: Metalloproteinase inhibitor 4 (170 aa).

One can recognise an NTR domain in the interval 1-105 (ISSEKVVPAS…SLNHHYHLNC (105 aa)). Involved in metalloproteinase-binding regions lie at residues 6–9 (VVPA) and 48–49 (SS). Intrachain disulfides connect Cys-107–Cys-154, Cys-112–Cys-117, and Cys-125–Cys-146.

Belongs to the protease inhibitor I35 (TIMP) family.

The protein localises to the secreted. In terms of biological role, complexes with metalloproteinases (such as collagenases) and irreversibly inactivates them by binding to their catalytic zinc cofactor. In Oryctolagus cuniculus (Rabbit), this protein is Metalloproteinase inhibitor 4 (TIMP4).